Consider the following 156-residue polypeptide: MNINATLIGQSVAFLIFVLFCMKYVWPPVITALQERQKKIADGLDAANRAARDLELAQEKAGQQLREAKAQAAEIIEQSKKRAAQLVEEAREQARVEADRVKAQALAEIEQELNSAKDALRAQVGALAVGGAEKILGATIDQNAHAELVNKLAAEI.

The chain crosses the membrane as a helical span at residues 12-32; sequence VAFLIFVLFCMKYVWPPVITA.

This sequence belongs to the ATPase B chain family. As to quaternary structure, F-type ATPases have 2 components, F(1) - the catalytic core - and F(0) - the membrane proton channel. F(1) has five subunits: alpha(3), beta(3), gamma(1), delta(1), epsilon(1). F(0) has three main subunits: a(1), b(2) and c(10-14). The alpha and beta chains form an alternating ring which encloses part of the gamma chain. F(1) is attached to F(0) by a central stalk formed by the gamma and epsilon chains, while a peripheral stalk is formed by the delta and b chains.

The protein resides in the cell inner membrane. Functionally, f(1)F(0) ATP synthase produces ATP from ADP in the presence of a proton or sodium gradient. F-type ATPases consist of two structural domains, F(1) containing the extramembraneous catalytic core and F(0) containing the membrane proton channel, linked together by a central stalk and a peripheral stalk. During catalysis, ATP synthesis in the catalytic domain of F(1) is coupled via a rotary mechanism of the central stalk subunits to proton translocation. Component of the F(0) channel, it forms part of the peripheral stalk, linking F(1) to F(0). The polypeptide is ATP synthase subunit b (Pseudomonas putida (strain ATCC 700007 / DSM 6899 / JCM 31910 / BCRC 17059 / LMG 24140 / F1)).